Reading from the N-terminus, the 503-residue chain is Glutamate--tRNA ligase (503 aa).

Positions 15-25 (PSPTGYLHVGG) match the 'HIGH' region motif. A 'KMSKS' region motif is present at residues 262–266 (KLSKR). Residue Lys265 coordinates ATP.

Belongs to the class-I aminoacyl-tRNA synthetase family. Glutamate--tRNA ligase type 1 subfamily. Monomer.

It localises to the cytoplasm. It catalyses the reaction tRNA(Glu) + L-glutamate + ATP = L-glutamyl-tRNA(Glu) + AMP + diphosphate. Functionally, catalyzes the attachment of glutamate to tRNA(Glu) in a two-step reaction: glutamate is first activated by ATP to form Glu-AMP and then transferred to the acceptor end of tRNA(Glu). In Prosthecochloris aestuarii (strain DSM 271 / SK 413), this protein is Glutamate--tRNA ligase.